We begin with the raw amino-acid sequence, 116 residues long: Ig heavy chain V region 3-6 (116 aa).

The first 18 residues, 1–18, serve as a signal peptide directing secretion; that stretch reads MKVLSLLYLLTAIPGILS. The interval 19–48 is framework-1; the sequence is DVQLQESGPGLVKPSQSLSLTCSVTGYSIT. C40 and C114 form a disulfide bridge. A complementarity-determining-1 region spans residues 49–53; the sequence is SGYYW. The segment at 54 to 67 is framework-2; it reads NWIRQFPGNKLEWM. A complementarity-determining-2 region spans residues 68-84; the sequence is GYISYDGSNNYNPSLKN. Residues 85–116 form a framework-3 region; it reads RISITRDTSKNQFFLKLNSVTTEDTATYYCAR.

The chain is Ig heavy chain V region 3-6 (Ighv3-6) from Mus musculus (Mouse).